A 286-amino-acid polypeptide reads, in one-letter code: 2-dehydro-3-deoxyphosphooctonate aldolase (286 aa).

The protein belongs to the KdsA family.

It is found in the cytoplasm. It catalyses the reaction D-arabinose 5-phosphate + phosphoenolpyruvate + H2O = 3-deoxy-alpha-D-manno-2-octulosonate-8-phosphate + phosphate. Its pathway is carbohydrate biosynthesis; 3-deoxy-D-manno-octulosonate biosynthesis; 3-deoxy-D-manno-octulosonate from D-ribulose 5-phosphate: step 2/3. It functions in the pathway bacterial outer membrane biogenesis; lipopolysaccharide biosynthesis. The sequence is that of 2-dehydro-3-deoxyphosphooctonate aldolase from Shewanella denitrificans (strain OS217 / ATCC BAA-1090 / DSM 15013).